Here is a 206-residue protein sequence, read N- to C-terminus: Ras-related protein Rab7 (206 aa).

GTP-binding positions include 15-22 (GDSGVGKT), 63-67 (DTAGQ), and 125-128 (NKVD). S-geranylgeranyl cysteine attachment occurs at residues cysteine 205 and cysteine 206.

This sequence belongs to the small GTPase superfamily. Rab family.

It localises to the cell membrane. Functionally, protein transport. Probably involved in vesicular traffic. This is Ras-related protein Rab7 from Cenchrus ciliaris (Buffelgrass).